Here is a 155-residue protein sequence, read N- to C-terminus: MAKGEGNLLAQNKKASHDYHIVETIEAGIVLTGTEIKSVRAARIQLKDGFAQIKNGEAWLMNVHIAPFEQGNIWNADPERTRKLLLKKREINHLANELKGTGMTLIPLKVYLKDGFAKILLGLAKGKHDYDKRESIKRREQDRDIKRVMKSINAR.

It belongs to the SmpB family.

The protein localises to the cytoplasm. Functionally, required for rescue of stalled ribosomes mediated by trans-translation. Binds to transfer-messenger RNA (tmRNA), required for stable association of tmRNA with ribosomes. tmRNA and SmpB together mimic tRNA shape, replacing the anticodon stem-loop with SmpB. tmRNA is encoded by the ssrA gene; the 2 termini fold to resemble tRNA(Ala) and it encodes a 'tag peptide', a short internal open reading frame. During trans-translation Ala-aminoacylated tmRNA acts like a tRNA, entering the A-site of stalled ribosomes, displacing the stalled mRNA. The ribosome then switches to translate the ORF on the tmRNA; the nascent peptide is terminated with the 'tag peptide' encoded by the tmRNA and targeted for degradation. The ribosome is freed to recommence translation, which seems to be the essential function of trans-translation. This chain is SsrA-binding protein, found in Streptococcus uberis (strain ATCC BAA-854 / 0140J).